The primary structure comprises 222 residues: Phosphoenolpyruvate guanylyltransferase (222 aa).

Phosphoenolpyruvate contacts are provided by threonine 147, glycine 163, and serine 166.

This sequence belongs to the CofC family.

It carries out the reaction phosphoenolpyruvate + GTP + H(+) = enolpyruvoyl-2-diphospho-5'-guanosine + diphosphate. The protein operates within cofactor biosynthesis; coenzyme F420 biosynthesis. In terms of biological role, guanylyltransferase that catalyzes the activation of phosphoenolpyruvate (PEP) as enolpyruvoyl-2-diphospho-5'-guanosine, via the condensation of PEP with GTP. It is involved in the biosynthesis of coenzyme F420, a hydride carrier cofactor. This chain is Phosphoenolpyruvate guanylyltransferase, found in Streptosporangium roseum (strain ATCC 12428 / DSM 43021 / JCM 3005 / KCTC 9067 / NCIMB 10171 / NRRL 2505 / NI 9100).